The chain runs to 214 residues: EEF1A lysine methyltransferase 1 (214 aa).

Serine 2 carries the post-translational modification N-acetylserine. Serine 2 carries the phosphoserine modification.

Belongs to the class I-like SAM-binding methyltransferase superfamily. EFM5 family.

It is found in the cytoplasm. The enzyme catalyses L-lysyl-[protein] + 3 S-adenosyl-L-methionine = N(6),N(6),N(6)-trimethyl-L-lysyl-[protein] + 3 S-adenosyl-L-homocysteine + 3 H(+). In terms of biological role, protein N-lysine methyltransferase that selectively catalyzes the trimethylation of EEF1A at 'Lys-79'. The polypeptide is EEF1A lysine methyltransferase 1 (Homo sapiens (Human)).